The primary structure comprises 129 residues: Putative transmembrane protein 10 (129 aa).

The next 3 membrane-spanning stretches (helical) occupy residues 3-23, 27-47, and 85-105; these read NFSY…AFAG, LLVG…LSSL, and SSVL…FFVF.

It localises to the host membrane. The chain is Putative transmembrane protein 10 (SIFV0010) from Sulfolobus islandicus filamentous virus (isolate Iceland/Hveragerdi) (SIFV).